The primary structure comprises 261 residues: Putative quercetin 2,3-dioxygenase Ta0133 (261 aa).

Residues H17, H19, H61, and E63 each coordinate a divalent metal cation.

The protein belongs to the pirin family. The cofactor is a divalent metal cation.

It catalyses the reaction quercetin + O2 = 2-(3,4-dihydroxybenzoyloxy)-4,6-dihydroxybenzoate + CO. It functions in the pathway flavonoid metabolism; quercetin degradation. In terms of biological role, putative quercetin 2,3-dioxygenase. The protein is Putative quercetin 2,3-dioxygenase Ta0133 of Thermoplasma acidophilum (strain ATCC 25905 / DSM 1728 / JCM 9062 / NBRC 15155 / AMRC-C165).